The sequence spans 329 residues: Formimidoylglutamase (329 aa).

His-133, Asp-159, His-161, Asp-163, Asp-253, and Asp-255 together coordinate Mn(2+).

The protein belongs to the arginase family. The cofactor is Mn(2+).

It catalyses the reaction N-formimidoyl-L-glutamate + H2O = formamide + L-glutamate. Its pathway is amino-acid degradation; L-histidine degradation into L-glutamate; L-glutamate from N-formimidoyl-L-glutamate (hydrolase route): step 1/1. In terms of biological role, catalyzes the conversion of N-formimidoyl-L-glutamate to L-glutamate and formamide. The sequence is that of Formimidoylglutamase from Streptococcus gordonii (strain Challis / ATCC 35105 / BCRC 15272 / CH1 / DL1 / V288).